The primary structure comprises 342 residues: N-acetyl-gamma-glutamyl-phosphate reductase (342 aa).

The active site involves C146.

It belongs to the NAGSA dehydrogenase family. Type 1 subfamily.

Its subcellular location is the cytoplasm. The catalysed reaction is N-acetyl-L-glutamate 5-semialdehyde + phosphate + NADP(+) = N-acetyl-L-glutamyl 5-phosphate + NADPH + H(+). It participates in amino-acid biosynthesis; L-arginine biosynthesis; N(2)-acetyl-L-ornithine from L-glutamate: step 3/4. Its function is as follows. Catalyzes the NADPH-dependent reduction of N-acetyl-5-glutamyl phosphate to yield N-acetyl-L-glutamate 5-semialdehyde. The polypeptide is N-acetyl-gamma-glutamyl-phosphate reductase (Thermobifida fusca (strain YX)).